The chain runs to 527 residues: MDKQLLPVLLLLLGVSGSWGQGEEPGGPSEVLPEEPTGEEVPKEDGILVLNHRTLSLALQEHSALMVEFYAPWCGHCKELAPEYSKAAALLAAESAVVTLAKVDGPAEPELTKEFEVVGYPTLKFFQNGNRTNPEEYAGPKTAEGIAEWLRRRVGPSATHLEDEEGVQALMAKWDMVVIGFFQDLQGKDMATFLALAKDALDMTFGFTDQPQLFEKFGLTKDTVVLFKKFDEGRADFPVDKETGLDLGDLSRFLVIHSMHLVTEFNSQTSPKIFAAKILNHLLLFVNQTLAQHRELLTDFREAAPPFRGQVLFVMVDVAADNSHVLNYFGLKAEEAPTLRLINVETTKKYAPTGVIAITAASVAAFCQAVLHGEIKHYLLSQEIPPDWDQGPVKTLVSKNFEQVAFDETKNVFVKFYAPWCSHCKEMAPAWEALAEKYKDREDIVIAELDATANELEAFSVLGYPTLKFFPAGPDRKVIDYKSTRDLETFSKFLDSGGHLPKEEPKEPAASAPEAQANSTLGPKEEL.

A signal peptide spans 1 to 20 (MDKQLLPVLLLLLGVSGSWG). The segment at 20 to 41 (GQGEEPGGPSEVLPEEPTGEEV) is disordered. The 127-residue stretch at 29-155 (SEVLPEEPTG…IAEWLRRRVG (127 aa)) folds into the Thioredoxin 1 domain. Active-site nucleophile residues include Cys74 and Cys77. Cys74 and Cys77 are disulfide-bonded. Asn130 and Asn287 each carry an N-linked (GlcNAc...) asparagine glycan. The region spanning 355–499 (VIAITAASVA…FSKFLDSGGH (145 aa)) is the Thioredoxin 2 domain. Active-site nucleophile residues include Cys421 and Cys424. Cys421 and Cys424 are oxidised to a cystine. The segment at 495-527 (DSGGHLPKEEPKEPAASAPEAQANSTLGPKEEL) is disordered. Residue Asn518 is glycosylated (N-linked (GlcNAc...) asparagine). Positions 524–527 (KEEL) match the Prevents secretion from ER motif.

The protein belongs to the protein disulfide isomerase family. In terms of assembly, part of a large chaperone multiprotein complex comprising DNAJB11, HSP90B1, HSPA5, HYOU, PDIA2, PDIA4, PDIA6, PPIB, SDF2L1, UGGT1 and very small amounts of ERP29, but not, or at very low levels, CALR nor CANX. In terms of processing, glycosylated. Highly expressed in pancreas.

The protein localises to the endoplasmic reticulum lumen. It catalyses the reaction Catalyzes the rearrangement of -S-S- bonds in proteins.. In terms of biological role, acts as an intracellular estrogen-binding protein. May be involved in modulating cellular levels and biological functions of estrogens in the pancreas. May act as a chaperone that inhibits aggregation of misfolded proteins. The polypeptide is Protein disulfide-isomerase A2 (Mus musculus (Mouse)).